Reading from the N-terminus, the 260-residue chain is Magnesium dechelatase SGRL, chloroplastic (260 aa).

The transit peptide at 1 to 45 directs the protein to the chloroplast; the sequence is MACYIVPYYHHPVLSHPNREIFSHRHHHHHRFCNNLLNRRISVPR.

It belongs to the staygreen family. As to quaternary structure, interacts with the light harvesting complex II (LHCII). Interacts with the chlorophyll catabolic enzymes (CCEs) NYC1, NOL, PAO and RCCR. In terms of tissue distribution, expressed in cotyledons, pollen and young leaves.

Its subcellular location is the plastid. It localises to the chloroplast thylakoid. The catalysed reaction is chlorophyllide a + 2 H(+) = pheophorbide a + Mg(2+). Magnesium chelatase involved in chlorophyll a degradation in the chlorophyll-protein complexes of photosystem I (PSI) and photosystem II (PSII). Contributes to the degradation of PSI and PSII in the thylakoid membranes. Recombinant SGRL possesses high dechelating activity against chlorophyllide a, very low activity against chlorophyll a, and no activity against chlorophyll b. Contributes to abiotic stress-induced chlorophyll degradation and leaf yellowing during vegetative plant growth. This chain is Magnesium dechelatase SGRL, chloroplastic, found in Arabidopsis thaliana (Mouse-ear cress).